The primary structure comprises 465 residues: Siroheme synthase (465 aa).

Residues 1–203 (MDFLPLFHSL…GRPAEAERLL (203 aa)) are precorrin-2 dehydrogenase /sirohydrochlorin ferrochelatase. NAD(+) contacts are provided by residues 22-23 (EV) and 43-44 (PQ). Ser128 carries the post-translational modification Phosphoserine. A uroporphyrinogen-III C-methyltransferase region spans residues 217-465 (GEVYLVGAGP…AWFEGAREDA (249 aa)). An S-adenosyl-L-methionine-binding site is contributed by Pro226. Asp249 serves as the catalytic Proton acceptor. The active-site Proton donor is Lys271. S-adenosyl-L-methionine-binding positions include 302–304 (GGD), Ile307, 332–333 (TA), Met384, and Gly413.

This sequence in the N-terminal section; belongs to the precorrin-2 dehydrogenase / sirohydrochlorin ferrochelatase family. The protein in the C-terminal section; belongs to the precorrin methyltransferase family.

It catalyses the reaction uroporphyrinogen III + 2 S-adenosyl-L-methionine = precorrin-2 + 2 S-adenosyl-L-homocysteine + H(+). The catalysed reaction is precorrin-2 + NAD(+) = sirohydrochlorin + NADH + 2 H(+). It carries out the reaction siroheme + 2 H(+) = sirohydrochlorin + Fe(2+). It participates in cofactor biosynthesis; adenosylcobalamin biosynthesis; precorrin-2 from uroporphyrinogen III: step 1/1. It functions in the pathway cofactor biosynthesis; adenosylcobalamin biosynthesis; sirohydrochlorin from precorrin-2: step 1/1. Its pathway is porphyrin-containing compound metabolism; siroheme biosynthesis; precorrin-2 from uroporphyrinogen III: step 1/1. The protein operates within porphyrin-containing compound metabolism; siroheme biosynthesis; siroheme from sirohydrochlorin: step 1/1. It participates in porphyrin-containing compound metabolism; siroheme biosynthesis; sirohydrochlorin from precorrin-2: step 1/1. Multifunctional enzyme that catalyzes the SAM-dependent methylations of uroporphyrinogen III at position C-2 and C-7 to form precorrin-2 via precorrin-1. Then it catalyzes the NAD-dependent ring dehydrogenation of precorrin-2 to yield sirohydrochlorin. Finally, it catalyzes the ferrochelation of sirohydrochlorin to yield siroheme. This Pseudomonas aeruginosa (strain ATCC 15692 / DSM 22644 / CIP 104116 / JCM 14847 / LMG 12228 / 1C / PRS 101 / PAO1) protein is Siroheme synthase.